A 495-amino-acid polypeptide reads, in one-letter code: REST corepressor 3 (495 aa).

The region spanning 1 to 83 (MRVGAEYQAR…KSLADLPNFT (83 aa)) is the ELM2 domain. Residue lysine 20 forms a Glycyl lysine isopeptide (Lys-Gly) (interchain with G-Cter in SUMO2) linkage. An SANT 1 domain is found at 84-135 (PFPDEWTVEDKVLFEQAFSFHGKSFHRIQQMLPDKTIASLVKYYYSWKKTRS). Residues 147 to 219 (LANRHNQGDS…SQRSKCRPPK (73 aa)) form a disordered region. Phosphoserine occurs at positions 156 and 171. Positions 162–184 (ETHPMDGNDSDYDPKKEAKKEGN) are enriched in basic and acidic residues. Lysine 193 participates in a covalent cross-link: Glycyl lysine isopeptide (Lys-Gly) (interchain with G-Cter in SUMO2). A compositionally biased stretch (basic residues) spans 205 to 217 (QHRHHSQRSKCRP). Residues 237-273 (AANTILRQLDMELISLKRQVQNAKQVNSALKQKMEGG) are a coiled coil. A Glycyl lysine isopeptide (Lys-Gly) (interchain with G-Cter in SUMO2) cross-link involves residue lysine 285. Residues 285-336 (KINARWTTEEQLLAVQGVRKYGKDFQAIADVIGNKTVGQVKNFFVNYRRRFN) enclose the SANT 2 domain. The interval 346-495 (AEQGTQASNG…IQTDSQSSLH (150 aa)) is disordered. Residues 348-357 (QGTQASNGDA) show a composition bias toward polar residues. At threonine 376 the chain carries Phosphothreonine. The span at 393-405 (PSPPAPSSTPTPT) shows a compositional bias: pro residues. Positions 419-428 (RPTLPAAPAL) are enriched in low complexity. 2 positions are modified to asymmetric dimethylarginine: arginine 445 and arginine 457. Residues 475–495 (VGGQQPPSLIGIQTDSQSSLH) show a composition bias toward polar residues.

Belongs to the CoREST family.

Its subcellular location is the nucleus. Functionally, may act as a component of a corepressor complex that represses transcription. This Homo sapiens (Human) protein is REST corepressor 3 (RCOR3).